Consider the following 393-residue polypeptide: Polygalacturonase (393 aa).

A signal peptide spans 1–23 (MANRRSLFSLSLIFVFMINSAIA). PbH1 repeat units lie at residues 115–136 (VNGV…WACK), 178–204 (FQNV…HVQM), 205–226 (SSGV…SIGP), 228–248 (TSNL…SIGS), 258–279 (VQNV…RIKS), and 288–309 (ARNI…VIDQ). Residue D219 is the Proton donor of the active site. A disulfide bridge links C221 with C238. The active site involves H242. The N-linked (GlcNAc...) asparagine glycan is linked to N260. 2 cysteine pairs are disulfide-bonded: C349/C355 and C376/C392.

The protein belongs to the glycosyl hydrolase 28 family.

The protein resides in the secreted. It localises to the cell wall. It carries out the reaction (1,4-alpha-D-galacturonosyl)n+m + H2O = (1,4-alpha-D-galacturonosyl)n + (1,4-alpha-D-galacturonosyl)m.. Its function is as follows. Acts in concert with the pectinesterase, in the ripening process. Is involved in cell wall metabolism, specifically in polyuronide degradation. This is Polygalacturonase from Prunus persica (Peach).